A 144-amino-acid polypeptide reads, in one-letter code: Large ribosomal subunit protein uL13 (144 aa).

This sequence belongs to the universal ribosomal protein uL13 family. As to quaternary structure, part of the 50S ribosomal subunit.

This protein is one of the early assembly proteins of the 50S ribosomal subunit, although it is not seen to bind rRNA by itself. It is important during the early stages of 50S assembly. The protein is Large ribosomal subunit protein uL13 of Blochmanniella pennsylvanica (strain BPEN).